The chain runs to 311 residues: Putative methylthioribose-1-phosphate isomerase (311 aa).

Residues 46–48 (RGA), arginine 80, and glutamine 174 contribute to the substrate site. Aspartate 215 functions as the Proton donor in the catalytic mechanism. 224–225 (NK) contributes to the substrate binding site.

It belongs to the eIF-2B alpha/beta/delta subunits family. MtnA subfamily.

It catalyses the reaction 5-(methylsulfanyl)-alpha-D-ribose 1-phosphate = 5-(methylsulfanyl)-D-ribulose 1-phosphate. In terms of biological role, catalyzes the interconversion of methylthioribose-1-phosphate (MTR-1-P) into methylthioribulose-1-phosphate (MTRu-1-P). The protein is Putative methylthioribose-1-phosphate isomerase of Methanothermobacter thermautotrophicus (strain ATCC 29096 / DSM 1053 / JCM 10044 / NBRC 100330 / Delta H) (Methanobacterium thermoautotrophicum).